A 158-amino-acid polypeptide reads, in one-letter code: C-type lectin lectoxin-Enh5 (158 aa).

Positions Met1–Gly23 are cleaved as a signal peptide. Disulfide bonds link Cys26–Cys37, Cys54–Cys154, and Cys129–Cys146. One can recognise a C-type lectin domain in the interval Arg33–Gln155. The short motif at Glu119–Asn121 is the Mannose-binding element. Residues Glu127, Asn142, and Asp143 each contribute to the Ca(2+) site.

The protein belongs to the true venom lectin family. As to expression, expressed by the venom gland.

The protein resides in the secreted. Its function is as follows. Mannose-binding lectin which recognizes specific carbohydrate structures and agglutinates a variety of animal cells by binding to cell-surface glycoproteins and glycolipids. May be a calcium-dependent lectin. This chain is C-type lectin lectoxin-Enh5, found in Pseudoferania polylepis (Macleay's water snake).